The chain runs to 439 residues: Phenylacetate-coenzyme A ligase (439 aa).

This sequence belongs to the phenylacetyl-CoA ligase family. Monomer.

The catalysed reaction is 2-phenylacetate + ATP + CoA = phenylacetyl-CoA + AMP + diphosphate. It participates in aromatic compound metabolism; phenylacetate degradation. With respect to regulation, inhibited by divalent cations (zinc, copper, mercury) and by the sulfhydryl reagents 5,5-dithiobis(2-nitrobenzoic acid), N-ethylmaleimide and p-chloromercuribenzoate. Catalyzes the activation of phenylacetic acid (PA) to phenylacetyl-CoA (PA-CoA). Involved in the phenylalanine metabolism. Can also use CTP and UTP as substrate. This is Phenylacetate-coenzyme A ligase (paaK) from Pseudomonas putida (Arthrobacter siderocapsulatus).